The sequence spans 207 residues: Interleukin-6 (207 aa).

Residues 1–18 (MKFFSIASLGLLLVVATA) form the signal peptide. Residues 26–47 (REDGENSVTRNKPTRASSGKTR) are disordered. Residues 31 to 44 (NSVTRNKPTRASSG) are compositionally biased toward polar residues. An intrachain disulfide couples Cys65 to Cys71. Ser74 is modified (phosphoserine). Cys94 and Cys104 form a disulfide bridge.

It belongs to the IL-6 superfamily. In terms of assembly, component of a hexamer of two molecules each of IL6, IL6R and IL6ST; first binds to IL6R to associate with the signaling subunit IL6ST. Interacts with IL6R (via the N-terminal ectodomain); this interaction may be affected by IL6R-binding with SORL1, hence decreasing IL6 cis signaling. Interacts with SORL1 (via the N-terminal ectodomain); this interaction leads to IL6 internalization and lysosomal degradation. May form a trimeric complex with the soluble SORL1 ectodomain and soluble IL6R receptor; this interaction might stabilize circulating IL6, hence promoting IL6 trans signaling.

The protein resides in the secreted. Functionally, cytokine with a wide variety of biological functions in immunity, tissue regeneration, and metabolism. Binds to IL6R, then the complex associates to the signaling subunit IL6ST/gp130 to trigger the intracellular IL6-signaling pathway. The interaction with the membrane-bound IL6R and IL6ST stimulates 'classic signaling', whereas the binding of IL6 and soluble IL6R to IL6ST stimulates 'trans-signaling'. Alternatively, 'cluster signaling' occurs when membrane-bound IL6:IL6R complexes on transmitter cells activate IL6ST receptors on neighboring receiver cells. IL6 is a potent inducer of the acute phase response. Rapid production of IL6 contributes to host defense during infection and tissue injury, but excessive IL6 synthesis is involved in disease pathology. In the innate immune response, is synthesized by myeloid cells, such as macrophages and dendritic cells, upon recognition of pathogens through toll-like receptors (TLRs) at the site of infection or tissue injury. In the adaptive immune response, is required for the differentiation of B cells into immunoglobulin-secreting cells. Plays a major role in the differentiation of CD4(+) T cell subsets. Essential factor for the development of T follicular helper (Tfh) cells that are required for the induction of germinal-center formation. Required to drive naive CD4(+) T cells to the Th17 lineage. Also required for proliferation of myeloma cells and the survival of plasmablast cells. In terms of biological role, acts as an essential factor in bone homeostasis and on vessels directly or indirectly by induction of VEGF, resulting in increased angiogenesis activity and vascular permeability. Induces, through 'trans-signaling' and synergistically with IL1B and TNF, the production of VEGF. Involved in metabolic controls, is discharged into the bloodstream after muscle contraction increasing lipolysis and improving insulin resistance. 'Trans-signaling' in central nervous system also regulates energy and glucose homeostasis. Mediates, through GLP-1, crosstalk between insulin-sensitive tissues, intestinal L cells and pancreatic islets to adapt to changes in insulin demand. Also acts as a myokine. Plays a protective role during liver injury, being required for maintenance of tissue regeneration. Also has a pivotal role in iron metabolism by regulating HAMP/hepcidin expression upon inflammation or bacterial infection. Through activation of IL6ST-YAP-NOTCH pathway, induces inflammation-induced epithelial regeneration. The polypeptide is Interleukin-6 (IL6) (Marmota monax (Woodchuck)).